The primary structure comprises 306 residues: Glutaminase (306 aa).

Serine 64, asparagine 115, glutamate 159, asparagine 166, tyrosine 190, tyrosine 242, and valine 260 together coordinate substrate.

Belongs to the glutaminase family. Homotetramer.

It catalyses the reaction L-glutamine + H2O = L-glutamate + NH4(+). This chain is Glutaminase, found in Vibrio parahaemolyticus serotype O3:K6 (strain RIMD 2210633).